The chain runs to 2270 residues: Protein DOP1B (2270 aa).

Disordered stretches follow at residues 548-572, 697-716, and 1084-1145; these read METP…VEGE, LKQR…TEEE, and QEQD…DMPR. Positions 1095-1145 are enriched in polar residues; it reads ADTSTGHNDSDNTSSFTPSSVDLSSDQNYRDNTAGQVTHKNTGQQNMDMPR.

Belongs to the DOP1 family.

Its subcellular location is the golgi apparatus membrane. Functionally, may be involved in protein traffic between late Golgi and early endosomes. In Xenopus laevis (African clawed frog), this protein is Protein DOP1B (dop1b).